The primary structure comprises 461 residues: Bifunctional protein HldE (461 aa).

A ribokinase region spans residues 1 to 312 (MLEFLSQQKP…IKSFNRVDFE (312 aa)). Residue 191-194 (NKKE) participates in ATP binding. Asp259 is a catalytic residue. Residues 334 to 461 (FTNGCFDIVH…KIIEKIKDKK (128 aa)) form a cytidylyltransferase region.

It in the N-terminal section; belongs to the carbohydrate kinase PfkB family. In the C-terminal section; belongs to the cytidylyltransferase family. In terms of assembly, homodimer.

It carries out the reaction D-glycero-beta-D-manno-heptose 7-phosphate + ATP = D-glycero-beta-D-manno-heptose 1,7-bisphosphate + ADP + H(+). It catalyses the reaction D-glycero-beta-D-manno-heptose 1-phosphate + ATP + H(+) = ADP-D-glycero-beta-D-manno-heptose + diphosphate. It functions in the pathway nucleotide-sugar biosynthesis; ADP-L-glycero-beta-D-manno-heptose biosynthesis; ADP-L-glycero-beta-D-manno-heptose from D-glycero-beta-D-manno-heptose 7-phosphate: step 1/4. It participates in nucleotide-sugar biosynthesis; ADP-L-glycero-beta-D-manno-heptose biosynthesis; ADP-L-glycero-beta-D-manno-heptose from D-glycero-beta-D-manno-heptose 7-phosphate: step 3/4. In terms of biological role, catalyzes the phosphorylation of D-glycero-D-manno-heptose 7-phosphate at the C-1 position to selectively form D-glycero-beta-D-manno-heptose-1,7-bisphosphate. Its function is as follows. Catalyzes the ADP transfer from ATP to D-glycero-beta-D-manno-heptose 1-phosphate, yielding ADP-D-glycero-beta-D-manno-heptose. The protein is Bifunctional protein HldE of Campylobacter jejuni subsp. jejuni serotype O:6 (strain 81116 / NCTC 11828).